A 549-amino-acid chain; its full sequence is Hydroxylamine reductase (549 aa).

Cysteine 3, cysteine 6, cysteine 15, and cysteine 21 together coordinate [4Fe-4S] cluster. Histidine 244, glutamate 268, cysteine 313, cysteine 405, cysteine 433, cysteine 458, glutamate 492, and lysine 494 together coordinate hybrid [4Fe-2O-2S] cluster. At cysteine 405 the chain carries Cysteine persulfide.

Belongs to the HCP family. The cofactor is [4Fe-4S] cluster. It depends on hybrid [4Fe-2O-2S] cluster as a cofactor.

The protein localises to the cytoplasm. It carries out the reaction A + NH4(+) + H2O = hydroxylamine + AH2 + H(+). Functionally, catalyzes the reduction of hydroxylamine to form NH(3) and H(2)O. The protein is Hydroxylamine reductase of Gloeothece citriformis (strain PCC 7424) (Cyanothece sp. (strain PCC 7424)).